The primary structure comprises 356 residues: D-xylulose reductase (356 aa).

The Zn(2+) site is built by Cys-44, His-69, and Glu-155. Residue Gly-179–Gly-184 coordinates NAD(+).

The protein belongs to the zinc-containing alcohol dehydrogenase family. Zn(2+) is required as a cofactor.

The catalysed reaction is xylitol + NAD(+) = D-xylulose + NADH + H(+). It participates in carbohydrate degradation; L-arabinose degradation via L-arabinitol; D-xylulose 5-phosphate from L-arabinose (fungal route): step 4/5. The chain is D-xylulose reductase (XYL2) from Saccharomyces cerevisiae (strain ATCC 204508 / S288c) (Baker's yeast).